The chain runs to 21 residues: FINTIRLLINKYREWKNKKDS.

The residue at position 21 (serine 21) is a Serine amide.

In terms of tissue distribution, expressed by the venom gland.

It is found in the secreted. The sequence is that of Cupiennin-6c from Cupiennius salei (American wandering spider).